Reading from the N-terminus, the 256-residue chain is Fructose-1,6-bisphosphatase/inositol-1-monophosphatase (256 aa).

Positions 65, 79, 81, and 82 each coordinate Mg(2+). Substrate is bound by residues 82–84 (DGT), Arg-172, Ala-177, and Arg-196. Asp-201 contributes to the Mg(2+) binding site.

This sequence belongs to the inositol monophosphatase superfamily. FBPase class 4 family. As to quaternary structure, homotetramer. Mg(2+) is required as a cofactor.

It carries out the reaction beta-D-fructose 1,6-bisphosphate + H2O = beta-D-fructose 6-phosphate + phosphate. The catalysed reaction is a myo-inositol phosphate + H2O = myo-inositol + phosphate. With respect to regulation, in contrast to mammalian I-1-P phosphatases, is only weakly inhibited by Li(+), since 50% inhibitory concentration for Li(+) is about 100 mM, and the Li(+) concentration required to totally abolish I-1-Pase activity is 1 M. Its function is as follows. Phosphatase with broad specificity; it can dephosphorylate fructose 1,6-bisphosphate, both D and L isomers of inositol-1-phosphate (I-1-P) but displaying a 20-fold higher rate of hydrolysis of D-I-1-P than of the L isomer, 2'-AMP, pNPP, inositol-2-phosphate, beta-glycerol phosphate, and alpha-D-glucose-1-phosphate. Cannot hydrolyze glucose-6-phosphate, fructose-6-phosphate, 5'-AMP and NAD(+). May be involved in the biosynthesis of a unique osmolyte, di-myo-inositol 1,1-phosphate. The sequence is that of Fructose-1,6-bisphosphatase/inositol-1-monophosphatase (suhB) from Thermotoga maritima (strain ATCC 43589 / DSM 3109 / JCM 10099 / NBRC 100826 / MSB8).